The sequence spans 238 residues: Keratin-associated protein 5-3 (238 aa).

Repeat copies occupy residues 35–38, 41–44, 47–50, 91–94, 150–153, 160–163, 170–173, 189–192, 199–202, 218–221, and 228–231. Positions 35-231 are 11 X 4 AA repeats of C-C-X-P; sequence CCVPVCCCKP…CSSQSSCCVP (197 aa).

Belongs to the KRTAP type 5 family. In terms of assembly, interacts with hair keratins. Restricted to hair root, not detected in any other tissues.

Its function is as follows. In the hair cortex, hair keratin intermediate filaments are embedded in an interfilamentous matrix, consisting of hair keratin-associated protein (KRTAP), which are essential for the formation of a rigid and resistant hair shaft through their extensive disulfide bond cross-linking with abundant cysteine residues of hair keratins. The matrix proteins include the high-sulfur and high-glycine-tyrosine keratins. The chain is Keratin-associated protein 5-3 (KRTAP5-3) from Homo sapiens (Human).